Here is a 104-residue protein sequence, read N- to C-terminus: MSAIQGIEGVISQLQATAMSARAQESLPQPTISFAGQLHAALDRISDTQTVARTQAEKFTLGEPGVALNDVMTDMQKASVSMQMGIQVRNKLVAAYQEVMSMQV.

Belongs to the FliE family.

The protein localises to the bacterial flagellum basal body. This is Flagellar hook-basal body complex protein FliE from Escherichia coli O6:K15:H31 (strain 536 / UPEC).